The sequence spans 614 residues: Type VII secretion system protein EssD (614 aa).

A disordered region spans residues 417–445 (QNHVTHGPKDSMVRSEGKHSISSHEMNSS). A compositionally biased stretch (basic and acidic residues) spans 423–435 (GPKDSMVRSEGKH).

The protein belongs to the EssD family. Interacts (via C-terminal) with EssG; this interaction blocks EssD activity. Interacts with EssE.

It localises to the secreted. The protein resides in the cell membrane. Its function is as follows. Component of the type VII secretion system (Ess). Plays a role in Ess secretion during infection. Required for the efficient secretion of EsxA. Required for abscess formation and staphylococcal persistence in host tissues. Possesses a toxic DNase activity that is modulated by EsaG by forming a nuclease toxin-antitoxin pair. This nuclease toxin targets competitor bacteria. The sequence is that of Type VII secretion system protein EssD from Staphylococcus aureus (strain USA300).